The chain runs to 236 residues: uncharacterized protein (236 aa).

NADP(+) is bound by residues Asp-22, Asn-49, and Lys-82. Active-site proton donor residues include Ser-100 and Tyr-114. NADP(+) contacts are provided by Tyr-114 and Lys-118. The Lowers pKa of active site Tyr role is filled by Lys-118.

It belongs to the short-chain dehydrogenases/reductases (SDR) family.

The protein localises to the cytoplasm. Its subcellular location is the nucleus. This is an uncharacterized protein from Schizosaccharomyces pombe (strain 972 / ATCC 24843) (Fission yeast).